The following is a 247-amino-acid chain: ATP synthase subunit a, chloroplastic (247 aa).

Helical transmembrane passes span 38-58 (QVLI…AIAV), 95-115 (VPFI…GALL), 134-154 (INTT…AGLT), 199-219 (LVVV…VMFL), and 220-240 (GLFT…AYIG).

It belongs to the ATPase A chain family. F-type ATPases have 2 components, CF(1) - the catalytic core - and CF(0) - the membrane proton channel. CF(1) has five subunits: alpha(3), beta(3), gamma(1), delta(1), epsilon(1). CF(0) has four main subunits: a, b, b' and c.

It is found in the plastid. Its subcellular location is the chloroplast thylakoid membrane. Functionally, key component of the proton channel; it plays a direct role in the translocation of protons across the membrane. The chain is ATP synthase subunit a, chloroplastic from Illicium oligandrum (Star anise).